We begin with the raw amino-acid sequence, 158 residues long: NAD(P)H-quinone oxidoreductase subunit N (158 aa).

Belongs to the complex I NdhN subunit family. In terms of assembly, NDH-1 can be composed of about 15 different subunits; different subcomplexes with different compositions have been identified which probably have different functions.

It is found in the cellular thylakoid membrane. The catalysed reaction is a plastoquinone + NADH + (n+1) H(+)(in) = a plastoquinol + NAD(+) + n H(+)(out). It carries out the reaction a plastoquinone + NADPH + (n+1) H(+)(in) = a plastoquinol + NADP(+) + n H(+)(out). Its function is as follows. NDH-1 shuttles electrons from an unknown electron donor, via FMN and iron-sulfur (Fe-S) centers, to quinones in the respiratory and/or the photosynthetic chain. The immediate electron acceptor for the enzyme in this species is believed to be plastoquinone. Couples the redox reaction to proton translocation, and thus conserves the redox energy in a proton gradient. Cyanobacterial NDH-1 also plays a role in inorganic carbon-concentration. This chain is NAD(P)H-quinone oxidoreductase subunit N, found in Prochlorococcus marinus (strain AS9601).